The primary structure comprises 105 residues: ATP synthase subunit c (105 aa).

3 consecutive transmembrane segments (helical) span residues 3-23 (FLALFFLALVGVAFAYDGGMD), 32-52 (SILGAMIGLGIAAFGGAIGMG), and 78-98 (VAMAMIEAQVIYTLVFAIIAI).

Belongs to the ATPase C chain family. As to quaternary structure, F-type ATPases have 2 components, F(1) - the catalytic core - and F(0) - the membrane proton channel. F(1) has five subunits: alpha(3), beta(3), gamma(1), delta(1), epsilon(1). F(0) has three main subunits: a(1), b(2) and c(10-14). The alpha and beta chains form an alternating ring which encloses part of the gamma chain. F(1) is attached to F(0) by a central stalk formed by the gamma and epsilon chains, while a peripheral stalk is formed by the delta and b chains.

It localises to the cell inner membrane. Its function is as follows. F(1)F(0) ATP synthase produces ATP from ADP in the presence of a proton or sodium gradient. F-type ATPases consist of two structural domains, F(1) containing the extramembraneous catalytic core and F(0) containing the membrane proton channel, linked together by a central stalk and a peripheral stalk. During catalysis, ATP synthesis in the catalytic domain of F(1) is coupled via a rotary mechanism of the central stalk subunits to proton translocation. Functionally, key component of the F(0) channel; it plays a direct role in translocation across the membrane. A homomeric c-ring of between 10-14 subunits forms the central stalk rotor element with the F(1) delta and epsilon subunits. This chain is ATP synthase subunit c, found in Helicobacter acinonychis (strain Sheeba).